The following is a 339-amino-acid chain: Methionine import ATP-binding protein MetN 2 (339 aa).

The 240-residue stretch at 2-241 (ISFNNVSKVY…PKTTTTQNFV (240 aa)) folds into the ABC transporter domain. 38-45 (GFSGAGKS) serves as a coordination point for ATP.

This sequence belongs to the ABC transporter superfamily. Methionine importer (TC 3.A.1.24) family. The complex is composed of two ATP-binding proteins (MetN), two transmembrane proteins (MetI) and a solute-binding protein (MetQ).

It localises to the cell membrane. The enzyme catalyses L-methionine(out) + ATP + H2O = L-methionine(in) + ADP + phosphate + H(+). It carries out the reaction D-methionine(out) + ATP + H2O = D-methionine(in) + ADP + phosphate + H(+). Part of the ABC transporter complex MetNIQ involved in methionine import. Responsible for energy coupling to the transport system. This chain is Methionine import ATP-binding protein MetN 2, found in Bacillus anthracis.